The following is a 185-amino-acid chain: DNA replication complex GINS protein PSF2 (185 aa).

The protein belongs to the GINS2/PSF2 family. Component of the GINS complex which is a heterotetramer of gins1/psf1, gins2/psf2, gins3/psf3 and gins4/sld5. Component of the CMG helicase complex, composed of the mcm2-7 complex, the GINS complex and cdc45.

It localises to the nucleus. Its subcellular location is the chromosome. Required for correct functioning of the GINS complex, a complex that plays an essential role in the initiation of DNA replication, and progression of DNA replication forks. GINS complex is a core component of CDC45-MCM-GINS (CMG) helicase, the molecular machine that unwinds template DNA during replication, and around which the replisome is built. This chain is DNA replication complex GINS protein PSF2 (gins2), found in Xenopus laevis (African clawed frog).